The following is a 103-amino-acid chain: Large ribosomal subunit protein bL21 (103 aa).

This sequence belongs to the bacterial ribosomal protein bL21 family. In terms of assembly, part of the 50S ribosomal subunit. Contacts protein L20.

Functionally, this protein binds to 23S rRNA in the presence of protein L20. The chain is Large ribosomal subunit protein bL21 from Clostridium acetobutylicum (strain ATCC 824 / DSM 792 / JCM 1419 / IAM 19013 / LMG 5710 / NBRC 13948 / NRRL B-527 / VKM B-1787 / 2291 / W).